The chain runs to 697 residues: PHD finger protein At2g01810 (697 aa).

Disordered stretches follow at residues 319–362 (DENS…QYYS) and 457–478 (EQKR…TSTT). Over residues 339-349 (SGRDTVLDDHN) the composition is skewed to basic and acidic residues. The PHD-type zinc-finger motif lies at 635–685 (TVDCKCGARDDDGERMVACDACKVWHHTLCNSIEDDEAVPSVFLCNMCYGD).

It localises to the nucleus. This is PHD finger protein At2g01810 from Arabidopsis thaliana (Mouse-ear cress).